Consider the following 342-residue polypeptide: Glutamyl endopeptidase (342 aa).

The signal sequence occupies residues M1 to A29. A propeptide spanning residues L30–N68 is cleaved from the precursor. Residues K33–Q63 are disordered. The span at P39–P50 shows a compositional bias: low complexity. Active-site charge relay system residues include H119, D161, and S237. The interval F283 to A342 is disordered. Over residues D286 to A342 the composition is skewed to low complexity. Repeat copies occupy residues P289 to N291, P292 to N294, P295 to N297, P298 to N300, P301 to N303, P304 to N306, P307 to N309, P310 to N312, P316 to N318, P319 to N321, P322 to N324, P325 to N327, and P328 to N330. The 13 X 3 AA repeats of P-[DN]-N stretch occupies residues P289–N330.

It belongs to the peptidase S1B family. Post-translationally, proteolytically cleaved by aureolysin (aur). This cleavage leads to the activation of SspA.

It localises to the secreted. It catalyses the reaction Preferential cleavage: Glu-|-Xaa, Asp-|-Xaa.. Functionally, preferentially cleaves peptide bonds on the carboxyl-terminal side of aspartate and glutamate. Along with other extracellular proteases it is involved in colonization and infection of human tissues. Required for proteolytic maturation of thiol protease SspB and inactivation of SspC, an inhibitor of SspB. It is the most important protease for degradation of fibronectin-binding protein (FnBP) and surface protein A, which are involved in adherence to host cells. May also protect bacteria against host defense mechanism by cleaving the immunoglobulin classes IgG, IgA and IgM. May be involved in the stability of secreted lipases. This chain is Glutamyl endopeptidase (sspA), found in Staphylococcus aureus (strain Mu50 / ATCC 700699).